Consider the following 833-residue polypeptide: 3-hydroxy-3-methylglutaryl-coenzyme A reductase (833 aa).

4 consecutive transmembrane segments (helical) span residues 10 to 32, 91 to 117, 160 to 180, and 301 to 321; these read FCAR…AASV, YLLI…LFWS, LALL…LVGV, and SADY…FVFF. The segment at 322–419 is linker; sequence EEQRNWVIDM…EEVVMLVEQS (98 aa). The segment at 347 to 374 is disordered; the sequence is KPKFSVGDDSNSEVSTQTEGVLEDEWPT. The segment covering 354–365 has biased composition (polar residues); it reads DDSNSEVSTQTE. The segment at 420–833 is catalytic; sequence HIPLHRLEAV…ENITLKVPTL (414 aa). Residues E504 and K635 each act as charge relay system in the active site. A glycan (N-linked (GlcNAc...) asparagine) is linked at N680. Residue D711 is the Charge relay system of the active site. N-linked (GlcNAc...) asparagine glycosylation is found at N715 and N720. H809 acts as the Proton donor in catalysis. N-linked (GlcNAc...) asparagine glycosylation is found at N813 and N825.

The protein belongs to the HMG-CoA reductase family.

It localises to the endoplasmic reticulum membrane. It catalyses the reaction (R)-mevalonate + 2 NADP(+) + CoA = (3S)-3-hydroxy-3-methylglutaryl-CoA + 2 NADPH + 2 H(+). It participates in metabolic intermediate biosynthesis; (R)-mevalonate biosynthesis; (R)-mevalonate from acetyl-CoA: step 3/3. The activity of HMG-CoA-reductase is suppressed by exogenous mevalonate. Functionally, synthesis of mevalonate for the production of non-sterol isoprenoids, which are essential for growth differentiation. The sequence is that of 3-hydroxy-3-methylglutaryl-coenzyme A reductase (HMGR) from Agrotis ipsilon (Black cutworm moth).